Here is a 695-residue protein sequence, read N- to C-terminus: DUF724 domain-containing protein 3 (695 aa).

The tract at residues 376 to 464 (ITVTPLKQQD…GTSDTIRVDD (89 aa)) is disordered. Basic and acidic residues predominate over residues 384–402 (QDAETEGKKSPKKTPEPVK). Residues 434–459 (NQNSNLNETDETCNVSKAGVNGTSDT) are compositionally biased toward polar residues. The DUF724 domain maps to 509 to 694 (PFTKNLPFWK…LEFITSVLAP (186 aa)). Residues 614–684 (VEERKCLEKR…TIDQEIANVE (71 aa)) are a coiled coil.

Homodimer.

In terms of biological role, may be involved in the polar growth of plant cells via transportation of RNAs. The chain is DUF724 domain-containing protein 3 from Arabidopsis thaliana (Mouse-ear cress).